A 400-amino-acid chain; its full sequence is MTQTVNEREDPLNLGGGGWASSIPLRTWPSYHRRQRGAPMSKRRYRDGPKTEYEAPRKQPKQQHIPGPWFQPPRGPYWALYSNWGRCGGPWRPPLVAFQSPLCPAQMIRAYGLHPLCVCCCSCWNGPWNPGWERPPGRKKRWGRRGRGLRRHPRRSFPRNPPIDLSKMLRPVNLYGWRAPGMRAPRNTTQFIMNQVYEDMRQQEKLERQQAALRAHQAQAGGISPGDSTTNDAPQSGAEEDSQLPEDLYGFMQDPSLTFSPAPGQQNQSPTPGLVEEEEKNVDDDECDEEVCDEKEESEEEEVDGESEDEDVDEEEVEEAGNGEEREEDQEEEDVSEEAGLEEGEQREEDKFLPLGMPLSILVGDEEERENFMNYDYLSQEQIIPNVPEADLFMVPDISH.

Residues methionine 1–proline 11 are compositionally biased toward basic and acidic residues. Disordered stretches follow at residues methionine 1 to proline 68, arginine 134 to aspartate 164, and glutamine 203 to leucine 353. The span at tyrosine 31–tyrosine 45 shows a compositional bias: basic residues. Residues arginine 46–arginine 57 show a composition bias toward basic and acidic residues. The span at glycine 137–phenylalanine 157 shows a compositional bias: basic residues. Positions glutamine 209 to alanine 220 are enriched in low complexity. A compositionally biased stretch (polar residues) spans proline 255–threonine 271. Acidic residues predominate over residues valine 275–arginine 347. The stretch at glutamate 299–valine 335 forms a coiled coil.

The protein localises to the nucleus. Regulator of histone epigenetic modifications and chromatin compaction into the sperm head, required for histone-to-protamine (HTP) transition. HTP is a key event in which somatic histones are first replaced by testis-specific histone variants, then transition proteins (TNPs) are incorporated into the spermatid nucleus, and finally protamines (PRMs) replace the TNPs to promote chromatin condensation. In Rattus norvegicus (Rat), this protein is Coiled-coil domain-containing glutamate-rich protein 1 (Ccer1).